Here is a 154-residue protein sequence, read N- to C-terminus: SsrA-binding protein (154 aa).

It belongs to the SmpB family.

The protein resides in the cytoplasm. Required for rescue of stalled ribosomes mediated by trans-translation. Binds to transfer-messenger RNA (tmRNA), required for stable association of tmRNA with ribosomes. tmRNA and SmpB together mimic tRNA shape, replacing the anticodon stem-loop with SmpB. tmRNA is encoded by the ssrA gene; the 2 termini fold to resemble tRNA(Ala) and it encodes a 'tag peptide', a short internal open reading frame. During trans-translation Ala-aminoacylated tmRNA acts like a tRNA, entering the A-site of stalled ribosomes, displacing the stalled mRNA. The ribosome then switches to translate the ORF on the tmRNA; the nascent peptide is terminated with the 'tag peptide' encoded by the tmRNA and targeted for degradation. The ribosome is freed to recommence translation, which seems to be the essential function of trans-translation. The polypeptide is SsrA-binding protein (Lachnoclostridium phytofermentans (strain ATCC 700394 / DSM 18823 / ISDg) (Clostridium phytofermentans)).